Here is a 177-residue protein sequence, read N- to C-terminus: Early nodulin-like protein 6 (177 aa).

The signal sequence occupies residues methionine 1 to cysteine 23. Positions threonine 24–glutamate 127 constitute a Phytocyanin domain. N-linked (GlcNAc...) asparagine glycosylation occurs at asparagine 41. A disulfide bond links cysteine 81 and cysteine 115. Asparagine 149 carries the GPI-anchor amidated asparagine lipid modification. The propeptide at histidine 150 to valine 177 is removed in mature form.

It belongs to the early nodulin-like (ENODL) family. Confined to flowers.

It localises to the cell membrane. May act as a carbohydrate transporter. The polypeptide is Early nodulin-like protein 6 (Arabidopsis thaliana (Mouse-ear cress)).